Here is a 167-residue protein sequence, read N- to C-terminus: Ubiquitin-fold modifier-conjugating enzyme 1 (167 aa).

Residue Cys-116 is the Glycyl thioester intermediate of the active site. Residue Lys-122 forms a Glycyl lysine isopeptide (Lys-Gly) (interchain with G-Cter in UFM1) linkage.

Belongs to the ubiquitin-conjugating enzyme family. UFC1 subfamily. In terms of assembly, interacts with UBA5 (via C-terminus). Interacts with UFL1. Interacts with UFM1. Interacts with KIRREL3. Post-translationally, ufmylated at Lys-122. Deufmylated by UFSP1.

E2-like enzyme which specifically catalyzes the second step in ufmylation. Accepts the ubiquitin-like modifier UFM1 from the E1 enzyme UBA5 and forms an intermediate with UFM1 via a thioester linkage. Ufmylation is involved in various processes, such as ribosome recycling, response to DNA damage, interferon response or reticulophagy (also called ER-phagy). The sequence is that of Ubiquitin-fold modifier-conjugating enzyme 1 from Rattus norvegicus (Rat).